We begin with the raw amino-acid sequence, 367 residues long: MDAYEYSELIKELENKIENIESILKPEKLEARLKEIEELENSPDFWNDPKTSAKVQKEKNAILRKLEKYKKAKTALQDNKDMFELASMEEDEETLNEVFNDVQDLKKIIRDLEIEVMLSDENDAKNAIISIHPGAGGTESHDWASILYRMYLRYAERRGWKVEVLDYQAGDEAGIKDVSFLVKGENAYGYLKAENGIHRLVRVSPFDSGGRRHTSFASVQVSPEIDDDIEIEIDPKDIRIDVFRASGAGGQHVNKTESAVRITHIPTGIVVGCQTDRSQHKNKDMAMKMLKSKLYELELEKRKAEEEGKPKDEMGWGHQIRSYVLFPYQQVKDNRSNKAYSRVDDILDGDLDEVIEDVLIAEKEHEN.

Position 251 is an N5-methylglutamine (Gln251).

Belongs to the prokaryotic/mitochondrial release factor family. Post-translationally, methylated by PrmC. Methylation increases the termination efficiency of RF2.

The protein localises to the cytoplasm. In terms of biological role, peptide chain release factor 2 directs the termination of translation in response to the peptide chain termination codons UGA and UAA. In Nautilia profundicola (strain ATCC BAA-1463 / DSM 18972 / AmH), this protein is Peptide chain release factor 2.